The sequence spans 173 residues: Gamma-crystallin S-2 (173 aa).

2 Beta/gamma crystallin 'Greek key' domains span residues 2 to 40 (GKII…RVES) and 41 to 83 (DWWV…RVPT). Positions 84–88 (HTQRP) are connecting peptide. Beta/gamma crystallin 'Greek key' domains are found at residues 89 to 129 (YRMR…HVMG) and 130 to 172 (AYWI…RRIM).

This sequence belongs to the beta/gamma-crystallin family.

Functionally, crystallins are the dominant structural components of the vertebrate eye lens. In Chiloscyllium indicum (Slender bamboo shark), this protein is Gamma-crystallin S-2 (GS-2).